The chain runs to 868 residues: Muscle, skeletal receptor tyrosine protein kinase (868 aa).

The N-terminal stretch at 1 to 21 (MRELVNIPLLQMLTLVAFSGT) is a signal peptide. The Extracellular portion of the chain corresponds to 22–494 (EKLPKAPVIT…FAVSPAYSMT (473 aa)). Ig-like domains follow at residues 28-116 (PVIT…GALQ), 121-205 (PKIT…KLVK), and 212-302 (ARIL…ATVS). Disulfide bonds link C49–C99, C98–C112, and C142–C190. An N-linked (GlcNAc...) asparagine glycan is attached at N222. 6 cysteine pairs are disulfide-bonded: C233–C282, C317–C382, C325–C375, C366–C406, C394–C447, and C398–C434. The FZ domain maps to 312–450 (ESKGYCAQYR…HQDPTACTRL (139 aa)). Residue N338 is glycosylated (N-linked (GlcNAc...) asparagine). Residue N459 is glycosylated (N-linked (GlcNAc...) asparagine). Residues 495-515 (VIISIMSCFAVFALLTITTLY) traverse the membrane as a helical segment. Residues 516 to 868 (CCRRRREWKN…CERAEGTVGV (353 aa)) lie on the Cytoplasmic side of the membrane. Phosphotyrosine; by autocatalysis is present on Y553. One can recognise a Protein kinase domain in the interval 574–855 (IEYVRDIGEG…PSFCSIHRIL (282 aa)). ATP is bound by residues 580-588 (IGEGAFGRV) and K608. A phosphoserine; by CK2 mark is found at S680 and S697. The active-site Proton acceptor is the D724. Y754 bears the Phosphotyrosine; by autocatalysis mark.

The protein belongs to the protein kinase superfamily. Tyr protein kinase family. In terms of assembly, monomer. Homodimer. Interacts with LRP4; the heterodimer forms an AGRIN receptor complex that binds AGRIN resulting in activation of MUSK. Forms a heterotetramer composed of 2 DOK7 and 2 MUSK molecules which facilitates MUSK trans-autophosphorylation on tyrosine residue and activation. Interacts (via cytoplasmic part) with DOK7 (via IRS-type PTB domain); requires MUSK phosphorylation. Interacts with DVL1 (via DEP domain); the interaction is direct and mediates the formation of a DVL1, MUSK and PAK1 ternary complex involved in AChR clustering. Interacts with PDZRN3; this interaction is enhanced by agrin. Interacts with FNTA; the interaction is direct and mediates AGRIN-induced phosphorylation and activation of FNTA. Interacts with CSNK2B; mediates regulation by CK2. Interacts (via the cytoplasmic domain) with DNAJA3. Interacts with NSF; may regulate MUSK endocytosis and activity. Interacts with CAV3; may regulate MUSK signaling. Interacts with RNF31. Interacts with DOK7. Mg(2+) serves as cofactor. In terms of processing, ubiquitinated by PDZRN3. Ubiquitination promotes endocytosis and lysosomal degradation. Phosphorylated. Phosphorylation is induced by AGRIN in a LRP4-dependent manner. Autophosphorylated. Autophosphorylation at Tyr-553 is required for interaction with DOK7 which in turn stimulates the phosphorylation and the activation of MUSK. Post-translationally, neddylated. As to expression, muscle specific.

It localises to the postsynaptic cell membrane. The catalysed reaction is L-tyrosyl-[protein] + ATP = O-phospho-L-tyrosyl-[protein] + ADP + H(+). Its activity is regulated as follows. Positively regulated by CK2. Receptor tyrosine kinase which plays a central role in the formation and the maintenance of the neuromuscular junction (NMJ), the synapse between the motor neuron and the skeletal muscle. Recruitment of AGRIN by LRP4 to the MUSK signaling complex induces phosphorylation and activation of MUSK, the kinase of the complex. The activation of MUSK in myotubes regulates the formation of NMJs through the regulation of different processes including the specific expression of genes in subsynaptic nuclei, the reorganization of the actin cytoskeleton and the clustering of the acetylcholine receptors (AChR) in the postsynaptic membrane. May regulate AChR phosphorylation and clustering through activation of ABL1 and Src family kinases which in turn regulate MUSK. DVL1 and PAK1 that form a ternary complex with MUSK are also important for MUSK-dependent regulation of AChR clustering. May positively regulate Rho family GTPases through FNTA. Mediates the phosphorylation of FNTA which promotes prenylation, recruitment to membranes and activation of RAC1 a regulator of the actin cytoskeleton and of gene expression. Other effectors of the MUSK signaling include DNAJA3 which functions downstream of MUSK. May also play a role within the central nervous system by mediating cholinergic responses, synaptic plasticity and memory formation. The polypeptide is Muscle, skeletal receptor tyrosine protein kinase (Musk) (Rattus norvegicus (Rat)).